The chain runs to 161 residues: Zinc finger A20 and AN1 domain-containing stress-associated protein 9 (161 aa).

The A20-type zinc-finger motif lies at 17–51; it reads PEAPILCVNNCGFFGSSMTNNMCSKCYRDFVKVTT. Positions 23, 27, 39, and 42 each coordinate Zn(2+). A disordered region spans residues 62–99; sequence FTPASSSKTPLEPAKPDEVPAAAVEDKQAAQEPPKPPS. The span at 75–90 shows a compositional bias: basic and acidic residues; that stretch reads AKPDEVPAAAVEDKQA. The AN1-type zinc-finger motif lies at 96 to 142; it reads KPPSNRCLSCRKKVGLTGFQCRCGGTFCSTHRYTEAHDCTFDYKKAG. Positions 102, 105, 116, 118, 123, 126, 132, and 134 each coordinate Zn(2+).

Its function is as follows. May be involved in environmental stress response. The protein is Zinc finger A20 and AN1 domain-containing stress-associated protein 9 (SAP9) of Oryza sativa subsp. japonica (Rice).